The following is a 24-amino-acid chain: Brevinin-1Pa (24 aa).

A disulfide bridge connects residues C18 and C24.

Expressed by the skin glands.

The protein localises to the secreted. Its function is as follows. Antibacterial activity against Gram-positive bacterium S.aureus and Gram-negative bacterium E.coli. Has activity against C.albicans. The chain is Brevinin-1Pa from Lithobates pipiens (Northern leopard frog).